A 297-amino-acid chain; its full sequence is Phosphatidylserine decarboxylase proenzyme (297 aa).

Active-site charge relay system; for autoendoproteolytic cleavage activity residues include D100, H157, and S263. The Schiff-base intermediate with substrate; via pyruvic acid; for decarboxylase activity role is filled by S263. S263 is modified (pyruvic acid (Ser); by autocatalysis).

This sequence belongs to the phosphatidylserine decarboxylase family. PSD-B subfamily. Prokaryotic type I sub-subfamily. Heterodimer of a large membrane-associated beta subunit and a small pyruvoyl-containing alpha subunit. The cofactor is pyruvate. Is synthesized initially as an inactive proenzyme. Formation of the active enzyme involves a self-maturation process in which the active site pyruvoyl group is generated from an internal serine residue via an autocatalytic post-translational modification. Two non-identical subunits are generated from the proenzyme in this reaction, and the pyruvate is formed at the N-terminus of the alpha chain, which is derived from the carboxyl end of the proenzyme. The autoendoproteolytic cleavage occurs by a canonical serine protease mechanism, in which the side chain hydroxyl group of the serine supplies its oxygen atom to form the C-terminus of the beta chain, while the remainder of the serine residue undergoes an oxidative deamination to produce ammonia and the pyruvoyl prosthetic group on the alpha chain. During this reaction, the Ser that is part of the protease active site of the proenzyme becomes the pyruvoyl prosthetic group, which constitutes an essential element of the active site of the mature decarboxylase.

It localises to the cell membrane. It catalyses the reaction a 1,2-diacyl-sn-glycero-3-phospho-L-serine + H(+) = a 1,2-diacyl-sn-glycero-3-phosphoethanolamine + CO2. It participates in phospholipid metabolism; phosphatidylethanolamine biosynthesis; phosphatidylethanolamine from CDP-diacylglycerol: step 2/2. In terms of biological role, catalyzes the formation of phosphatidylethanolamine (PtdEtn) from phosphatidylserine (PtdSer). The protein is Phosphatidylserine decarboxylase proenzyme of Glaesserella parasuis serovar 5 (strain SH0165) (Haemophilus parasuis).